The primary structure comprises 625 residues: tRNA uridine 5-carboxymethylaminomethyl modification enzyme MnmG (625 aa).

Residue 14-19 (GAGHAG) participates in FAD binding. Position 273–287 (273–287 (GPRYCPSIEDKIVRF)) interacts with NAD(+).

This sequence belongs to the MnmG family. As to quaternary structure, homodimer. Heterotetramer of two MnmE and two MnmG subunits. FAD is required as a cofactor.

The protein localises to the cytoplasm. Functionally, NAD-binding protein involved in the addition of a carboxymethylaminomethyl (cmnm) group at the wobble position (U34) of certain tRNAs, forming tRNA-cmnm(5)s(2)U34. This chain is tRNA uridine 5-carboxymethylaminomethyl modification enzyme MnmG, found in Clostridium botulinum (strain Loch Maree / Type A3).